The following is a 220-amino-acid chain: Protein-L-isoaspartate O-methyltransferase (220 aa).

The active site involves serine 68.

This sequence belongs to the methyltransferase superfamily. L-isoaspartyl/D-aspartyl protein methyltransferase family.

The protein resides in the cytoplasm. The catalysed reaction is [protein]-L-isoaspartate + S-adenosyl-L-methionine = [protein]-L-isoaspartate alpha-methyl ester + S-adenosyl-L-homocysteine. Functionally, catalyzes the methyl esterification of L-isoaspartyl residues in peptides and proteins that result from spontaneous decomposition of normal L-aspartyl and L-asparaginyl residues. It plays a role in the repair and/or degradation of damaged proteins. This is Protein-L-isoaspartate O-methyltransferase from Dictyoglomus thermophilum (strain ATCC 35947 / DSM 3960 / H-6-12).